The primary structure comprises 118 residues: Large ribosomal subunit protein uL18 (118 aa).

Belongs to the universal ribosomal protein uL18 family. In terms of assembly, part of the 50S ribosomal subunit; part of the 5S rRNA/L5/L18/L25 subcomplex. Contacts the 5S and 23S rRNAs.

Its function is as follows. This is one of the proteins that bind and probably mediate the attachment of the 5S RNA into the large ribosomal subunit, where it forms part of the central protuberance. This chain is Large ribosomal subunit protein uL18, found in Helicobacter pylori (strain J99 / ATCC 700824) (Campylobacter pylori J99).